The sequence spans 90 residues: Large ribosomal subunit protein bL27 (90 aa).

The disordered stretch occupies residues 1 to 24; sequence MAHKKGTGSTRNGRDSNSKRLGVK.

The protein belongs to the bacterial ribosomal protein bL27 family.

The polypeptide is Large ribosomal subunit protein bL27 (Prochlorococcus marinus (strain NATL1A)).